Reading from the N-terminus, the 642-residue chain is Palmitoyltransferase akr1 (642 aa).

ANK repeat units lie at residues 1-29, 33-62, 67-96, 100-129, 133-162, and 166-196; these read MGSLFLAASQGELDTVKNLISSEKIDVNA, GGATALHWAALNQQIPICKFLLEHGADVNA, LQAAPIHWAAKRGSVKTVHYLVQHGADPLL, QGFNCLHLAVHAASPLLVVYLLHLDISVDL, QQHTPLMWASYHGNEPITNCLLRWGADVLA, and DKMTPLHWSIVGGNLKCMKLILKEGGIPCTA. At 1-256 the chain is on the cytoplasmic side; the sequence is MGSLFLAASQ…SKFQFSQKTF (256 aa). The next 2 membrane-spanning stretches (helical) occupy residues 257–277 and 278–298; these read IIFCFLSSFIITGVFFFIMSI and CPMVISLIIAPLWIYFTFKYI. The Cytoplasmic segment spans residues 299 to 316; sequence TTCIHANIDIVHFYLETP. A helical membrane pass occupies residues 317 to 337; it reads FLAGIFSSIFFWVWCHSLLYI. The Lumenal portion of the chain corresponds to 338–343; sequence VPKTLP. Residues 344–364 form a helical membrane-spanning segment; that stretch reads IKPLSSLLFVLISFTCIGLYV. Over 365-444 the chain is Cytoplasmic; that stretch reads RTAFQNPGYV…NCVGARNHRT (80 aa). A DHHC domain is found at 400 to 450; sequence HYCLKCFQVKPPRSYHCGACKRCINRYDHHCPWTGNCVGARNHRTFLLFVF. The active-site S-palmitoyl cysteine intermediate is the C430. Residues 445-465 form a helical membrane-spanning segment; that stretch reads FLLFVFTLSTLIPIYFYVAFY. Topologically, residues 466-496 are lumenal; it reads YLQNIPIQKKYESYRCLFISGTICQWSLKDM. A helical transmembrane segment spans residues 497 to 517; sequence FVLVASLTLFVNWCWVVVLAF. Residues 518–642 lie on the Cytoplasmic side of the membrane; it reads TQICQVAHNV…GRQDEATRHV (125 aa).

It belongs to the DHHC palmitoyltransferase family. AKR/ZDHHC17 subfamily.

Its subcellular location is the early endosome membrane. It localises to the golgi apparatus membrane. The catalysed reaction is L-cysteinyl-[protein] + hexadecanoyl-CoA = S-hexadecanoyl-L-cysteinyl-[protein] + CoA. Functionally, palmitoyltransferase specific for casein kinase 1. The chain is Palmitoyltransferase akr1 (akr1) from Schizosaccharomyces pombe (strain 972 / ATCC 24843) (Fission yeast).